The following is a 357-amino-acid chain: Crh-like protein 1 (357 aa).

An N-terminal signal peptide occupies residues 1-17; sequence MMLPLLAVSAFASLGAA. The region spanning 20-220 is the GH16 domain; that stretch reads YTSCNPTNSL…WAGGETDYDE (201 aa). Residues N52 and N92 are each glycosylated (N-linked (GlcNAc...) asparagine). The Nucleophile role is filled by E109. Catalysis depends on E113, which acts as the Proton donor. Residue E113 participates in chitin binding. Residue N131 is glycosylated (N-linked (GlcNAc...) asparagine). Chitin-binding residues include K193, W197, and T208. N-linked (GlcNAc...) asparagine glycosylation is found at N242 and N257. G326 is lipidated: GPI-anchor amidated glycine. Positions 327–357 are cleaved as a propeptide — removed in mature form; sequence SASAVFTGAAVTNLPSFFFTVFFALAIALAF. A helical transmembrane segment spans residues 337–357; sequence VTNLPSFFFTVFFALAIALAF.

It belongs to the glycosyl hydrolase 16 family. CRH1 subfamily. The GPI-like anchor contains a phosphoceramide lipid group. The anchor position has not been determined.

The protein resides in the cell membrane. It localises to the secreted. Its subcellular location is the cell wall. The enzyme catalyses Random endo-hydrolysis of N-acetyl-beta-D-glucosaminide (1-&gt;4)-beta-linkages in chitin and chitodextrins.. Dual chitinase/transglycosylase that plays a role in cell wall architecture. Chitinase and transglycosylase activities are coupled. Required for the polysaccharide cross-linking at the septa and the cell wall. More specifically, transfers chitin to 1,6-beta-glucan in the cell wall. The polypeptide is Crh-like protein 1 (Aspergillus fumigatus (strain ATCC MYA-4609 / CBS 101355 / FGSC A1100 / Af293) (Neosartorya fumigata)).